The sequence spans 677 residues: Methionine--tRNA ligase (677 aa).

A 'HIGH' region motif is present at residues 15-25 (PYANGSIHLGH). Residues Cys146, Cys149, Cys159, and Cys162 each contribute to the Zn(2+) site. The 'KMSKS' region motif lies at 333-337 (KMSKS). Residue Lys336 participates in ATP binding. A tRNA-binding domain is found at 575 to 677 (DFAKVDLRVA…AGAKPGHQVK (103 aa)).

It belongs to the class-I aminoacyl-tRNA synthetase family. MetG type 1 subfamily. In terms of assembly, homodimer. The cofactor is Zn(2+).

It is found in the cytoplasm. It catalyses the reaction tRNA(Met) + L-methionine + ATP = L-methionyl-tRNA(Met) + AMP + diphosphate. In terms of biological role, is required not only for elongation of protein synthesis but also for the initiation of all mRNA translation through initiator tRNA(fMet) aminoacylation. This chain is Methionine--tRNA ligase, found in Escherichia coli (strain UTI89 / UPEC).